The primary structure comprises 281 residues: MIENRPWLTIFSHTMLILGIAVILFPLYVAFVAATLDKQEVYAAPMTLIPGTHLLENIHNIWVNGVGTNSAPFWRMLLNSFVMAFSITLGKITVSMLSAFAIVWFRFPLRNLFFWMIFITLMLPVEVRIFPTVEVIANLKMLDSYAGLTLPLMASATATFLFRQFFMTLPDELVEAARIDGASPMRFFCDIVFPLSKTNLAALFVITFIYGWNQYLWPLLIITDVDLGTTVAGIKGMIATGEGTTEWNSVMAAMLLTLIPPVVIVLVMQRAFVRGLVDSEK.

Transmembrane regions (helical) follow at residues 16–36 (LILG…AATL), 85–105 (FSIT…IVWF), 113–133 (FFWM…FPTV), 142–162 (LDSY…TFLF), 202–222 (ALFV…LLII), and 247–267 (WNSV…IVLV). The region spanning 77-268 (LLNSFVMAFS…IPPVVIVLVM (192 aa)) is the ABC transmembrane type-1 domain.

It belongs to the binding-protein-dependent transport system permease family. UgpAE subfamily. As to quaternary structure, the complex is composed of two ATP-binding proteins (UgpC), two transmembrane proteins (UgpA and UgpE) and a solute-binding protein (UgpB).

It is found in the cell inner membrane. Part of the ABC transporter complex UgpBAEC involved in sn-glycerol-3-phosphate (G3P) import. Probably responsible for the translocation of the substrate across the membrane. This is sn-glycerol-3-phosphate transport system permease protein UgpE (ugpE) from Escherichia coli O6:K15:H31 (strain 536 / UPEC).